Reading from the N-terminus, the 242-residue chain is Probable transcriptional regulatory protein MHP7448_0474 (242 aa).

It belongs to the TACO1 family.

The protein resides in the cytoplasm. The sequence is that of Probable transcriptional regulatory protein MHP7448_0474 from Mesomycoplasma hyopneumoniae (strain 7448) (Mycoplasma hyopneumoniae).